The chain runs to 296 residues: Phosphoribosylaminoimidazole-succinocarboxamide synthase (296 aa).

This sequence belongs to the SAICAR synthetase family.

It catalyses the reaction 5-amino-1-(5-phospho-D-ribosyl)imidazole-4-carboxylate + L-aspartate + ATP = (2S)-2-[5-amino-1-(5-phospho-beta-D-ribosyl)imidazole-4-carboxamido]succinate + ADP + phosphate + 2 H(+). The protein operates within purine metabolism; IMP biosynthesis via de novo pathway; 5-amino-1-(5-phospho-D-ribosyl)imidazole-4-carboxamide from 5-amino-1-(5-phospho-D-ribosyl)imidazole-4-carboxylate: step 1/2. The polypeptide is Phosphoribosylaminoimidazole-succinocarboxamide synthase (Citrifermentans bemidjiense (strain ATCC BAA-1014 / DSM 16622 / JCM 12645 / Bem) (Geobacter bemidjiensis)).